A 333-amino-acid polypeptide reads, in one-letter code: DNA primase small subunit PriS (333 aa).

Residues Asp-96, Asp-98, and Asp-237 contribute to the active site.

This sequence belongs to the eukaryotic-type primase small subunit family. As to quaternary structure, heterodimer of a small subunit (PriS) and a large subunit (PriL). The cofactor is Mg(2+). Mn(2+) is required as a cofactor.

Functionally, catalytic subunit of DNA primase, an RNA polymerase that catalyzes the synthesis of short RNA molecules used as primers for DNA polymerase during DNA replication. The small subunit contains the primase catalytic core and has DNA synthesis activity on its own. Binding to the large subunit stabilizes and modulates the activity, increasing the rate of DNA synthesis while decreasing the length of the DNA fragments, and conferring RNA synthesis capability. The DNA polymerase activity may enable DNA primase to also catalyze primer extension after primer synthesis. May also play a role in DNA repair. This Thermoplasma volcanium (strain ATCC 51530 / DSM 4299 / JCM 9571 / NBRC 15438 / GSS1) protein is DNA primase small subunit PriS.